Here is a 102-residue protein sequence, read N- to C-terminus: Small ribosomal subunit protein uS10 (102 aa).

This sequence belongs to the universal ribosomal protein uS10 family. In terms of assembly, part of the 30S ribosomal subunit.

Its function is as follows. Involved in the binding of tRNA to the ribosomes. This Methanothrix thermoacetophila (strain DSM 6194 / JCM 14653 / NBRC 101360 / PT) (Methanosaeta thermophila) protein is Small ribosomal subunit protein uS10.